The primary structure comprises 102 residues: ATP-dependent Clp protease adapter protein ClpS (102 aa).

This sequence belongs to the ClpS family. In terms of assembly, binds to the N-terminal domain of the chaperone ClpA.

Involved in the modulation of the specificity of the ClpAP-mediated ATP-dependent protein degradation. This is ATP-dependent Clp protease adapter protein ClpS from Shewanella amazonensis (strain ATCC BAA-1098 / SB2B).